The following is a 283-amino-acid chain: MASGSACTAVKIGIIGGTGLDDPEILEGRTEKYVDTPFGKPSDALILGKIKNVDCVLLARHGRQHTIMPSKVNYQANIWALKEEGCTHVIVTTACGSLREEIQPGDMVIIDQFIDRTSLRPQTFYDGSHCSARGVCHIPMAEPFCPKTREVLIETAKKLGLRCHSKGTIVTIEGPRFSSRAESLIFRTWGADVVNMTTVPEVVLAKEAGICYASIAMATDYDCWKEHEEAVSVDGVLKTMKENANKAKSLLLTTIPQIGSMEWSETLRNLKNMAQFSVLPPRH.

Residue Thr18 participates in phosphate binding. Residue Lys51 is modified to N6-acetyllysine. Residues 60–61 and 93–94 contribute to the phosphate site; these read RH and TA. Met196 is a substrate binding site. Thr197 is a phosphate binding site. Residue 220-222 participates in substrate binding; the sequence is DYD.

It belongs to the PNP/MTAP phosphorylase family. MTAP subfamily. Homotrimer.

It localises to the cytoplasm. The protein localises to the nucleus. It carries out the reaction S-methyl-5'-thioadenosine + phosphate = 5-(methylsulfanyl)-alpha-D-ribose 1-phosphate + adenine. Its pathway is amino-acid biosynthesis; L-methionine biosynthesis via salvage pathway; S-methyl-5-thio-alpha-D-ribose 1-phosphate from S-methyl-5'-thioadenosine (phosphorylase route): step 1/1. Functionally, catalyzes the reversible phosphorylation of S-methyl-5'-thioadenosine (MTA) to adenine and 5-methylthioribose-1-phosphate. Involved in the breakdown of MTA, a major by-product of polyamine biosynthesis. Responsible for the first step in the methionine salvage pathway after MTA has been generated from S-adenosylmethionine. Has broad substrate specificity with 6-aminopurine nucleosides as preferred substrates. The sequence is that of S-methyl-5'-thioadenosine phosphorylase (Mtap) from Mus musculus (Mouse).